We begin with the raw amino-acid sequence, 132 residues long: MISAKTLRPAIAAIALFAIGATGAWAQDKITVTSEKPVAAADVPADAVVVGIEKMKYLTPEVTIKAGETVYWVNGEVMPHNVAFKKGIVGEDAFRGEMMTKDQAYAITFNEAGSYDYFCTPHPFMRGKVIVE.

A signal peptide spans 1–26; it reads MISAKTLRPAIAAIALFAIGATGAWA. Glutamine 27 bears the Pyrrolidone carboxylic acid mark. The 106-residue stretch at 27–132 folds into the Plastocyanin-like domain; it reads QDKITVTSEK…PFMRGKVIVE (106 aa). Histidine 80, cysteine 119, histidine 122, and methionine 125 together coordinate Cu cation.

Requires Cu cation as cofactor.

It localises to the periplasm. The protein operates within one-carbon metabolism; methylamine degradation. Its function is as follows. Primary acceptor of electrons from methylamine dehydrogenase. Passes those electrons on either a soluble cytochrome c or to pseudoazurin. The chain is Amicyanin (mauC) from Paracoccus versutus (Thiobacillus versutus).